The sequence spans 1204 residues: DNA-directed RNA polymerase subunit beta' (1204 aa).

4 residues coordinate Zn(2+): cysteine 60, cysteine 62, cysteine 75, and cysteine 78. Residues aspartate 449, aspartate 451, and aspartate 453 each contribute to the Mg(2+) site. Zn(2+)-binding residues include cysteine 819, cysteine 893, cysteine 900, and cysteine 903.

It belongs to the RNA polymerase beta' chain family. As to quaternary structure, the RNAP catalytic core consists of 2 alpha, 1 beta, 1 beta' and 1 omega subunit. When a sigma factor is associated with the core the holoenzyme is formed, which can initiate transcription. Mg(2+) serves as cofactor. The cofactor is Zn(2+).

The enzyme catalyses RNA(n) + a ribonucleoside 5'-triphosphate = RNA(n+1) + diphosphate. Functionally, DNA-dependent RNA polymerase catalyzes the transcription of DNA into RNA using the four ribonucleoside triphosphates as substrates. The protein is DNA-directed RNA polymerase subunit beta' of Bacillus cytotoxicus (strain DSM 22905 / CIP 110041 / 391-98 / NVH 391-98).